The primary structure comprises 380 residues: MAPNIRKSHPLLKMINNSLIDLPAPSNISAWWNFGSLLAVCLMTQILTGLLLAMHYTADTSLAFSSVAHTCRNVQYGWLIRNLHANGASFFFICIFLHIGRGLYYGSYLYKETWNTGVILLLTLMATAFVGYVLPWGQMSFWGATVITNLFSAIPYIGQTLVEWTWGGFSVDNPTLTRFFALHFLLPFAIAGITVVHLTFLHESGSNNPLGISSNSDKIPFHPYYSLKDILGLTLMLTPFLTLALFSPNLLGDPENFTPANPLVTPPHIKPEWYFLFAYAILRSIPNKLGGVLALAASVLILFLIPFLHKSKQRTMTFRPLSQTLFWLLVANLLILTWIGSQPVEHPFMIIGQMASLSYFTILLILFPTIGTLENKMLNY.

4 helical membrane-spanning segments follow: residues Phe-34–Met-54, Trp-78–Ile-99, Trp-114–Leu-134, and Phe-179–Thr-199. Heme b is bound by residues His-84 and His-98. Positions 183 and 197 each coordinate heme b. Position 202 (His-202) interacts with a ubiquinone. 4 helical membrane passes run Leu-227 to Ser-247, Leu-289 to His-309, Leu-321 to Ser-341, and Phe-348 to Pro-368.

Belongs to the cytochrome b family. In terms of assembly, the cytochrome bc1 complex contains 11 subunits: 3 respiratory subunits (MT-CYB, CYC1 and UQCRFS1), 2 core proteins (UQCRC1 and UQCRC2) and 6 low-molecular weight proteins (UQCRH/QCR6, UQCRB/QCR7, UQCRQ/QCR8, UQCR10/QCR9, UQCR11/QCR10 and a cleavage product of UQCRFS1). This cytochrome bc1 complex then forms a dimer. Heme b is required as a cofactor.

The protein resides in the mitochondrion inner membrane. Component of the ubiquinol-cytochrome c reductase complex (complex III or cytochrome b-c1 complex) that is part of the mitochondrial respiratory chain. The b-c1 complex mediates electron transfer from ubiquinol to cytochrome c. Contributes to the generation of a proton gradient across the mitochondrial membrane that is then used for ATP synthesis. The chain is Cytochrome b (MT-CYB) from Gallus lafayettii (Sri Lanka junglefowl).